The chain runs to 364 residues: UDP-N-acetylglucosamine--N-acetylmuramyl-(pentapeptide) pyrophosphoryl-undecaprenol N-acetylglucosamine transferase 1 (364 aa).

Residues 10-12, Asn-124, Ser-195, Ile-250, and Gln-295 contribute to the UDP-N-acetyl-alpha-D-glucosamine site; that span reads TGG.

The protein belongs to the glycosyltransferase 28 family. MurG subfamily.

The protein localises to the cell membrane. The catalysed reaction is di-trans,octa-cis-undecaprenyl diphospho-N-acetyl-alpha-D-muramoyl-L-alanyl-D-glutamyl-meso-2,6-diaminopimeloyl-D-alanyl-D-alanine + UDP-N-acetyl-alpha-D-glucosamine = di-trans,octa-cis-undecaprenyl diphospho-[N-acetyl-alpha-D-glucosaminyl-(1-&gt;4)]-N-acetyl-alpha-D-muramoyl-L-alanyl-D-glutamyl-meso-2,6-diaminopimeloyl-D-alanyl-D-alanine + UDP + H(+). Its pathway is cell wall biogenesis; peptidoglycan biosynthesis. Cell wall formation. Catalyzes the transfer of a GlcNAc subunit on undecaprenyl-pyrophosphoryl-MurNAc-pentapeptide (lipid intermediate I) to form undecaprenyl-pyrophosphoryl-MurNAc-(pentapeptide)GlcNAc (lipid intermediate II). The sequence is that of UDP-N-acetylglucosamine--N-acetylmuramyl-(pentapeptide) pyrophosphoryl-undecaprenol N-acetylglucosamine transferase 1 from Bacillus thuringiensis subsp. konkukian (strain 97-27).